The following is a 394-amino-acid chain: Tyrosine--tRNA ligase, cytoplasmic (394 aa).

Position 2 is an N-acetylserine (serine 2). Tyrosine 43 is a binding site for L-tyrosine. Residues 48–56 carry the 'HIGH' region motif; sequence PTGRPHCGY. The L-tyrosine site is built by tyrosine 170, glutamine 174, aspartate 177, and glutamine 192. Residues 227–231 carry the 'KMSKS' region motif; the sequence is KMSAS. Serine 235 carries the phosphoserine modification. The disordered stretch occupies residues 348 to 394; that stretch reads QEASEKGYPVATPQKSKKAKKPKNKGTKYPGATKTNEIATKLEETKL. Threonine 359 is subject to Phosphothreonine. The Nuclear localization signal signature appears at 360–378; sequence PQKSKKAKKPKNKGTKYPG. The span at 362 to 373 shows a compositional bias: basic residues; sequence KSKKAKKPKNKG.

It belongs to the class-I aminoacyl-tRNA synthetase family. Homodimer. Interacts with KNR4/SMI1.

Its subcellular location is the cytoplasm. The protein localises to the nucleus. The enzyme catalyses tRNA(Tyr) + L-tyrosine + ATP = L-tyrosyl-tRNA(Tyr) + AMP + diphosphate + H(+). Inhibited by N-ethylmaleimide and p-chloromercuribenzoate. Its function is as follows. Catalyzes the attachment of L-tyrosine to tRNA(Tyr) in a two-step reaction: L-tyrosine is first activated by ATP to form Tyr-AMP and then transferred to the acceptor end of tRNA(Tyr). The specificity determinants on tRNA(Tyr) are the base pair C1-G72, the discriminator residue A73, and the three anticodon bases G34, U35 and A36. Also involved in nuclear tRNA export. Also attaches D-Tyr to tRNA(Tyr), this reaction is about 150-fold less efficient than attachment of L-Tyr. The protein is Tyrosine--tRNA ligase, cytoplasmic of Saccharomyces cerevisiae (strain ATCC 204508 / S288c) (Baker's yeast).